Here is a 353-residue protein sequence, read N- to C-terminus: UPF0283 membrane protein YcjF (353 aa).

A compositionally biased stretch (basic and acidic residues) spans 1-19 (MSEPLKPRIDFAEPLKEEP). The interval 1–35 (MSEPLKPRIDFAEPLKEEPTSAFKAQQTFSEAESR) is disordered. 3 helical membrane passes run 70–90 (MVMGGLALFGASVVGQGVQWT), 100–120 (VALGGCAAGALIIGAGVGSVV), and 213–233 (ESTLMIAVSPLALVDMAFIAW).

Belongs to the UPF0283 family.

It localises to the cell inner membrane. This Salmonella paratyphi C (strain RKS4594) protein is UPF0283 membrane protein YcjF.